The sequence spans 259 residues: Global transcriptional regulator CodY (259 aa).

The interval 1–155 (MNLLEKTRKI…GATVVGMEIL (155 aa)) is GAF domain. Residues 203–222 (ASKIADRVGITRSVIVNALR) constitute a DNA-binding region (H-T-H motif). Residue Ser-215 is modified to Phosphoserine.

It belongs to the CodY family.

The protein localises to the cytoplasm. In terms of biological role, DNA-binding global transcriptional regulator which is involved in the adaptive response to starvation and acts by directly or indirectly controlling the expression of numerous genes in response to nutrient availability. During rapid exponential growth, CodY is highly active and represses genes whose products allow adaptation to nutrient depletion. The protein is Global transcriptional regulator CodY of Geobacillus kaustophilus (strain HTA426).